Reading from the N-terminus, the 227-residue chain is Probable minor pilin MMP0600 (227 aa).

A propeptide spanning residues 1 to 7 (MAKFSKG) is cleaved from the precursor. Positions 8–16 (QISIELILL) match the QXSXEXXXL motif.

Post-translationally, the N-terminus is probably cleaved by the prepilin peptidase EppA, which recognizes the class III signal sequence.

It localises to the secreted. The protein resides in the cell surface. Its subcellular location is the fimbrium. The protein is Probable minor pilin MMP0600 of Methanococcus maripaludis (strain DSM 14266 / JCM 13030 / NBRC 101832 / S2 / LL).